A 317-amino-acid polypeptide reads, in one-letter code: WSCD family member CG9164 (317 aa).

Residues 8–28 traverse the membrane as a helical segment; sequence FFGVSATIIIYIGGVLFLSMN. Asn151, Asn227, and Asn233 each carry an N-linked (GlcNAc...) asparagine glycan.

This sequence belongs to the WSCD family.

The protein resides in the membrane. This is WSCD family member CG9164 from Drosophila melanogaster (Fruit fly).